The following is a 458-amino-acid chain: uncharacterized protein (458 aa).

In terms of domain architecture, TRAM spans 5 to 65 (QAPVNKNDVV…KGYGFGRVLN (61 aa)). 4 residues coordinate [4Fe-4S] cluster: Cys-78, Cys-84, Cys-87, and Cys-165. S-adenosyl-L-methionine-binding residues include Gln-289, Tyr-318, Glu-339, and Asp-387. Cys-414 (nucleophile) is an active-site residue.

It belongs to the class I-like SAM-binding methyltransferase superfamily. RNA M5U methyltransferase family.

This is an uncharacterized protein from Halalkalibacterium halodurans (strain ATCC BAA-125 / DSM 18197 / FERM 7344 / JCM 9153 / C-125) (Bacillus halodurans).